The primary structure comprises 411 residues: MSDSLAGNGMRQNLNRSSTSSNHTGHAQNGRAPQDPLVDAGHFIKQLACQVQSLACLKWLSELQILACIPLEGSRPLHDVAELANVPASQLSRVVRIVATIGFLNEPDPGHIAHTALSAQFVVDFSLFDSILFLLTTVVPCSMQMSTLTQRHGSAFPTNDGAYRIAFNTSQSFDAACVEGSRLRREWLAYKSNTTIVDETIADVLLRQDWHSLGHVKVVDACAQSTDFGNSLAERCSTLRVVVQLDTATTNGHSEIDSSMSRGRAVIQRRPQGTRQMVEDAAVCILKIEAPSTTIRARVTAELLAHLEVLRNNESAVLIVAAPLLPEPGTVSTSAEASARSSDLTTLQLSNSPQLELDRLIDIVENVPNARDSLKVVQRILFRNGMVAAIEVRYRASSEDQFATPAGTIDW.

Residues 1-27 (MSDSLAGNGMRQNLNRSSTSSNHTGHA) are compositionally biased toward polar residues. Positions 1-32 (MSDSLAGNGMRQNLNRSSTSSNHTGHAQNGRA) are disordered. The region spanning 47–117 (LACQVQSLAC…DPGHIAHTAL (71 aa)) is the HTH iclR-type domain. Positions 77-96 (LHDVAELANVPASQLSRVVR) form a DNA-binding region, H-T-H motif.

The protein localises to the nucleus. Its function is as follows. Transcriptional coactivator; part of the gene cluster that mediates the biosynthesis of cladofulvin, a conidial pigment not required for virulence but that plays a role in fitness and resistance to environmental stresses including UV light and low-temperature stress. With claE, coregulates the production of cladofulvin. This chain is Cladofulvin cluster transcriptional coactivator claA, found in Passalora fulva (Tomato leaf mold).